A 597-amino-acid polypeptide reads, in one-letter code: MTARPYEPPPDYFCTHLLKNHQIEWKKPVKAKASPIHLFVFLREPMIEQRWPTTVRNSSIHPHVSSAHPSYRSHSIDAAVNRSSSACFHSPHRPSFPSRGLQKYDYPICGVSPSRHLSYNHFYNQSAAEIEEMLRTRQFPEIAGIYGNDEQPSLRRFTRYNQSINSRAVPPPAPPNPPKMEKHMSHDTSGRGSIFSKSSKKPLFFMGNWTFRDRNKSARPSISEALREERPQSMNLSDIKPATRSKSGEVLGPRNHIHIESITEFPRNIETRVPVKIERSSMVRRKPSNMGGSTEVSITSSSPSPSSSSSTSTGEFKTTITVDDDHQPTAVMRPKKESDTRGTLNNNRYSFQSCVQLRKSCPDLDSTAMSNMEQHRVSKKRTRRAKEKMSQAAWKRKTVKEWSLDDVLLWLQSAQMDDVAGLLIGYDLRGEDLLQWNDQTLAQLGVSNPEIRKKLLDDLSKIIENGPEPAQEDIRNNHRTLFDIVKQTSYDQVLAVETPLTTRDITVTHGRLGCLQITKVNGANLPLKEHDCLLEINERAGEQFKSALMLTKLISDSNGAAIRFVVLRRKTNLVVEESQQKESSSSGISSSPQTPTE.

Disordered regions lie at residues 165-197 (NSRAVPPPAPPNPPKMEKHMSHDTSGRGSIFSK) and 278-344 (ERSS…RGTL). Pro residues predominate over residues 169 to 178 (VPPPAPPNPP). A compositionally biased stretch (basic and acidic residues) spans 179 to 189 (KMEKHMSHDTS). Residues 293 to 313 (STEVSITSSSPSPSSSSSTST) show a composition bias toward low complexity. The region spanning 402-465 (WSLDDVLLWL…LDDLSKIIEN (64 aa)) is the SAM domain. The tract at residues 576 to 597 (EESQQKESSSSGISSSPQTPTE) is disordered. Residues 581–597 (KESSSSGISSSPQTPTE) show a composition bias toward low complexity.

This is an uncharacterized protein from Caenorhabditis elegans.